We begin with the raw amino-acid sequence, 163 residues long: ATP synthase subunit b (163 aa).

Positions 1-11 (MLWKANVWVLG) are excised as a propeptide. Residues 16-36 (GISGGTIIYQLLMFIILLALL) form a helical membrane-spanning segment.

This sequence belongs to the ATPase B chain family. As to quaternary structure, F-type ATPases have 2 components, F(1) - the catalytic core - and F(0) - the membrane proton channel. F(1) has five subunits: alpha(3), beta(3), gamma(1), delta(1), epsilon(1). F(0) has three main subunits: a(1), b(2) and c(10-14). The alpha and beta chains form an alternating ring which encloses part of the gamma chain. F(1) is attached to F(0) by a central stalk formed by the gamma and epsilon chains, while a peripheral stalk is formed by the delta and b chains.

It is found in the cell membrane. In terms of biological role, f(1)F(0) ATP synthase produces ATP from ADP in the presence of a proton or sodium gradient. F-type ATPases consist of two structural domains, F(1) containing the extramembraneous catalytic core and F(0) containing the membrane proton channel, linked together by a central stalk and a peripheral stalk. During catalysis, ATP synthesis in the catalytic domain of F(1) is coupled via a rotary mechanism of the central stalk subunits to proton translocation. Component of the F(0) channel, it forms part of the peripheral stalk, linking F(1) to F(0). The chain is ATP synthase subunit b from Bacillus sp. (strain PS3).